The following is a 293-amino-acid chain: Protein PET54 (293 aa).

Its subcellular location is the mitochondrion inner membrane. Functionally, activator of specific mitochondrial mRNAs. PET54 is involved in the excision of intron aI5-beta from pre-mRNA for cytochrome c oxidase I (COX1) and plays a role in promoting the translation of COX3. This chain is Protein PET54 (PET54), found in Saccharomyces cerevisiae (strain ATCC 204508 / S288c) (Baker's yeast).